The primary structure comprises 471 residues: UDP-N-acetylmuramoylalanine--D-glutamate ligase (471 aa).

122 to 128 (GTNGKTT) provides a ligand contact to ATP.

It belongs to the MurCDEF family.

Its subcellular location is the cytoplasm. The catalysed reaction is UDP-N-acetyl-alpha-D-muramoyl-L-alanine + D-glutamate + ATP = UDP-N-acetyl-alpha-D-muramoyl-L-alanyl-D-glutamate + ADP + phosphate + H(+). Its pathway is cell wall biogenesis; peptidoglycan biosynthesis. Functionally, cell wall formation. Catalyzes the addition of glutamate to the nucleotide precursor UDP-N-acetylmuramoyl-L-alanine (UMA). This Streptomyces coelicolor (strain ATCC BAA-471 / A3(2) / M145) protein is UDP-N-acetylmuramoylalanine--D-glutamate ligase.